Here is a 638-residue protein sequence, read N- to C-terminus: DNA gyrase subunit B (638 aa).

The region spanning 422 to 536 is the Toprim domain; it reads SELYIVEGDS…NGYVYIAQPP (115 aa). The Mg(2+) site is built by E428, D501, and D503.

This sequence belongs to the type II topoisomerase GyrB family. Heterotetramer, composed of two GyrA and two GyrB chains. In the heterotetramer, GyrA contains the active site tyrosine that forms a transient covalent intermediate with DNA, while GyrB binds cofactors and catalyzes ATP hydrolysis. The cofactor is Mg(2+). Requires Mn(2+) as cofactor. Ca(2+) is required as a cofactor.

It is found in the cytoplasm. The catalysed reaction is ATP-dependent breakage, passage and rejoining of double-stranded DNA.. Its function is as follows. A type II topoisomerase that negatively supercoils closed circular double-stranded (ds) DNA in an ATP-dependent manner to modulate DNA topology and maintain chromosomes in an underwound state. Negative supercoiling favors strand separation, and DNA replication, transcription, recombination and repair, all of which involve strand separation. Also able to catalyze the interconversion of other topological isomers of dsDNA rings, including catenanes and knotted rings. Type II topoisomerases break and join 2 DNA strands simultaneously in an ATP-dependent manner. The chain is DNA gyrase subunit B from Bacillus subtilis (strain 168).